We begin with the raw amino-acid sequence, 384 residues long: Involucrin (384 aa).

The segment at 1-384 (MSQQHTLPVT…LPEQPQEPEV (384 aa)) is disordered. 2 stretches are compositionally biased toward basic and acidic residues: residues 56–65 (PSKHEEKGTD) and 80–134 (PELH…ELHL). Over residues 137–146 (QQQQESQEQE) the composition is skewed to low complexity. Residues 179–208 (KQREPQESQEQRLHLGKEQESQEQRLHLGE) show a composition bias toward basic and acidic residues. Positions 239–267 (PEQRLQLLPQGPQEQELHLGKQQQQQESQ) are enriched in low complexity. 2 stretches are compositionally biased toward basic and acidic residues: residues 268–308 (QHQE…KKLL) and 315–336 (EAVK…KEQL).

This sequence belongs to the involucrin family. In terms of assembly, directly or indirectly cross-linked to cornifelin (CNFN). Post-translationally, substrate of transglutaminase. Specific glutamines or lysines are cross-linked to keratins, desmoplakin and to inter involucrin molecules. Keratinocytes of epidermis and other stratified squamous epithelia.

It localises to the cytoplasm. Its function is as follows. Part of the insoluble cornified cell envelope (CE) of stratified squamous epithelia. The protein is Involucrin (IVL) of Otolemur crassicaudatus (Brown greater galago).